The primary structure comprises 280 residues: MKLAAMIKKMCPSDSELSIPAKNCYRMVILGSSKVGKTAIVSRFLTGRFEDAYTPTIEDFHRKFYSIRGEVYQLDILDTSGNHPFPAMRRLSILTGDVFILVFSLDNRDSFEEVQRLKQQILDTKSCLKNKTKENVDVPLVICGNKGDRDFYREVEQREIEQLVGDDPQRCAYFEISAKKNSSLDQMFRALFAMAKLPSEMSPDLHRKVSVQYCDVLHKKALRNKKLLRAGSGGGGDHGDAFGILAPFARRPSVHSDLMYIREKTSVSSQAKDKERCVIS.

Position 11 is an S-nitrosocysteine (C11). 31 to 38 (GSSKVGKT) provides a ligand contact to GTP. An Effector region motif is present at residues 53–61 (YTPTIEDFH). GTP is bound by residues 78-82 (DTSGN) and 145-148 (NKGD). Position 277 is a cysteine methyl ester (C277). Residue C277 is the site of S-farnesyl cysteine attachment. A propeptide spans 278–280 (VIS) (removed in mature form).

This sequence belongs to the small GTPase superfamily. RasD family. As to quaternary structure, forms a ternary complex with CAPON and NOS1. Component of a complex, at least composed of APBB1, RASD1/DEXRAS1 and APP. Interacts with APBB1/FE65. Forms. Post-translationally, S-nitrosylation stimulates guanine-nucleotide exchange activity. As to expression, prominently found in brain at both mRNA and protein levels. Moderate expression in testis and lung. Slightly expressed in heart, spleen, skeletal muscle, liver and kidney.

It localises to the cell membrane. It is found in the cytoplasm. The protein resides in the perinuclear region. Its subcellular location is the nucleus. Functionally, small GTPase. Negatively regulates the transcription regulation activity of the APBB1/FE65-APP complex via its interaction with APBB1/FE65. The sequence is that of Dexamethasone-induced Ras-related protein 1 (Rasd1) from Rattus norvegicus (Rat).